The sequence spans 129 residues: Protein Turandot A1/2 (129 aa).

An N-terminal signal peptide occupies residues 1–21 (MNSSTALMCFALLLISPLCLG). Asparagine 49 carries an N-linked (GlcNAc...) asparagine glycan.

The protein belongs to the Turandot family.

The protein localises to the secreted. Functionally, a humoral factor that plays a role in stress tolerance; gives increased resistance to the lethal effects of bacterial challenge and stress. Regulated by the JAK/STAT pathway and NF-KB-like Relish pathway in the fat body, upd3 in the hemocytes and Mekk1 in response to septic injury and consequent immune response. This chain is Protein Turandot A1/2 (TotA1), found in Drosophila sechellia (Fruit fly).